Here is a 435-residue protein sequence, read N- to C-terminus: Palmitoyltransferase pfa4 (435 aa).

Over 1–10 (MLCSSFSVSR) the chain is Cytoplasmic. Residues 11–31 (LAIPAVCILIAFLAYTSQIFF) form a helical membrane-spanning segment. Over 32-48 (LYFEDAPLKEDEVWRIN) the chain is Lumenal. Residues 49-69 (ILAICIWICYYRACTVDPGHV) form a helical membrane-spanning segment. Over 70 to 129 (PKGWMPSDRERLKADRASGRQRWCRRCEAYKPPRAHHCKTCERCVPKMDHHCPWTSNCVS) the chain is Cytoplasmic. One can recognise a DHHC domain in the interval 91–141 (RWCRRCEAYKPPRAHHCKTCERCVPKMDHHCPWTSNCVSHFTFPHFARFLF). Catalysis depends on cysteine 121, which acts as the S-palmitoyl cysteine intermediate. Residues 130-150 (HFTFPHFARFLFYAVVGIAYL) form a helical membrane-spanning segment. Over 151-179 (ETRLWQRVSKVWGSRHLPSYLGPSMGQIG) the chain is Lumenal. The helical transmembrane segment at 180-200 (HLFVLFVTNSLTLFALSLLLL) threads the bilayer. The Cytoplasmic segment spans residues 201 to 435 (RTLWSLGSNT…QRAKRQHLSQ (235 aa)). The segment covering 359–368 (RKPFHVRLEE) has biased composition (basic and acidic residues). The interval 359 to 408 (RKPFHVRLEEYSNGSSDAEADTGSDDDSDHGEEGWKNSEGERLRDFGVDE) is disordered. The span at 376-388 (AEADTGSDDDSDH) shows a compositional bias: acidic residues. Over residues 389 to 405 (GEEGWKNSEGERLRDFG) the composition is skewed to basic and acidic residues.

Belongs to the DHHC palmitoyltransferase family. PFA4 subfamily.

The protein localises to the endoplasmic reticulum membrane. The catalysed reaction is L-cysteinyl-[protein] + hexadecanoyl-CoA = S-hexadecanoyl-L-cysteinyl-[protein] + CoA. In terms of biological role, mediates the reversible addition of palmitate to target proteins, thereby regulating their membrane association and biological function. The chain is Palmitoyltransferase pfa4 from Emericella nidulans (strain FGSC A4 / ATCC 38163 / CBS 112.46 / NRRL 194 / M139) (Aspergillus nidulans).